The following is a 577-amino-acid chain: Proline--tRNA ligase (577 aa).

Belongs to the class-II aminoacyl-tRNA synthetase family. ProS type 1 subfamily. As to quaternary structure, homodimer.

It localises to the cytoplasm. It catalyses the reaction tRNA(Pro) + L-proline + ATP = L-prolyl-tRNA(Pro) + AMP + diphosphate. Catalyzes the attachment of proline to tRNA(Pro) in a two-step reaction: proline is first activated by ATP to form Pro-AMP and then transferred to the acceptor end of tRNA(Pro). As ProRS can inadvertently accommodate and process non-cognate amino acids such as alanine and cysteine, to avoid such errors it has two additional distinct editing activities against alanine. One activity is designated as 'pretransfer' editing and involves the tRNA(Pro)-independent hydrolysis of activated Ala-AMP. The other activity is designated 'posttransfer' editing and involves deacylation of mischarged Ala-tRNA(Pro). The misacylated Cys-tRNA(Pro) is not edited by ProRS. This Helicobacter pylori (strain HPAG1) protein is Proline--tRNA ligase.